The chain runs to 129 residues: uncharacterized protein (129 aa).

This is an uncharacterized protein from Lepidoptera (butterflies and moths).